A 906-amino-acid chain; its full sequence is DNA gyrase subunit A (906 aa).

The Topo IIA-type catalytic domain maps to 35-524 (IPDVRDGLKP…GEFDQDIEDL (490 aa)). Catalysis depends on Y123, which acts as the O-(5'-phospho-DNA)-tyrosine intermediate. A GyrA-box motif is present at residues 551 to 557 (QKRGGKG). Residues 886–906 (SESEEDSELEEDLEQAEEVYT) form a disordered region.

Belongs to the type II topoisomerase GyrA/ParC subunit family. In terms of assembly, heterotetramer, composed of two GyrA and two GyrB chains. In the heterotetramer, GyrA contains the active site tyrosine that forms a transient covalent intermediate with DNA, while GyrB binds cofactors and catalyzes ATP hydrolysis.

The protein localises to the cytoplasm. The enzyme catalyses ATP-dependent breakage, passage and rejoining of double-stranded DNA.. In terms of biological role, a type II topoisomerase that negatively supercoils closed circular double-stranded (ds) DNA in an ATP-dependent manner to modulate DNA topology and maintain chromosomes in an underwound state. Negative supercoiling favors strand separation, and DNA replication, transcription, recombination and repair, all of which involve strand separation. Also able to catalyze the interconversion of other topological isomers of dsDNA rings, including catenanes and knotted rings. Type II topoisomerases break and join 2 DNA strands simultaneously in an ATP-dependent manner. The protein is DNA gyrase subunit A of Rickettsia felis (strain ATCC VR-1525 / URRWXCal2) (Rickettsia azadi).